The following is a 127-amino-acid chain: Glycine cleavage system H protein (127 aa).

The Lipoyl-binding domain occupies 22-104; that stretch reads KARIGITHFA…YEKAWMIVVE (83 aa). Residue Lys63 is modified to N6-lipoyllysine.

This sequence belongs to the GcvH family. As to quaternary structure, the glycine cleavage system is composed of four proteins: P, T, L and H. (R)-lipoate serves as cofactor.

The glycine cleavage system catalyzes the degradation of glycine. The H protein shuttles the methylamine group of glycine from the P protein to the T protein. Functionally, is also involved in protein lipoylation via its role as an octanoyl/lipoyl carrier protein intermediate. In Bacillus velezensis (strain DSM 23117 / BGSC 10A6 / LMG 26770 / FZB42) (Bacillus amyloliquefaciens subsp. plantarum), this protein is Glycine cleavage system H protein.